Consider the following 1214-residue polypeptide: Sodium bicarbonate cotransporter 3 (1214 aa).

Residues 1-12 (MERFRLEKKLPG) are compositionally biased toward basic and acidic residues. Disordered stretches follow at residues 1–22 (MERFRLEKKLPGPDEEAVVDLG) and 52–93 (SKES…PSQR). The Extracellular portion of the chain corresponds to 1–608 (MERFRLEKKL…DFKDALSLQC (608 aa)). A phosphoserine mark is found at serine 52, serine 55, serine 84, serine 150, leucine 165, and cysteine 168. Residues 55–72 (SRRRHRHRGHKHHHRRRK) show a composition bias toward basic residues. The segment covering 73–85 (DKESDKEDGRESP) has biased composition (basic and acidic residues). N-linked (GlcNAc...) asparagine glycosylation is present at asparagine 171. Phosphoserine is present on residues serine 233, serine 242, serine 255, arginine 258, serine 260, threonine 263, glycine 264, and alanine 267. N-linked (GlcNAc...) asparagine glycosylation occurs at asparagine 269. Disordered stretches follow at residues 289-346 (SRAG…IPTV), 362-408 (EEQK…ENST), and 552-572 (FHNGSTPTLGETPKEAAHHAG). Residues 303-313 (VPTPQNSPPSS) show a composition bias toward pro residues. Over residues 314-332 (PSISRLTSRSSQESQRQAP) the composition is skewed to low complexity. Over residues 379–392 (SPQSAPGNLDNSKS) the composition is skewed to polar residues. Residue serine 382 is modified to Phosphoserine. N-linked (GlcNAc...) asparagine glycosylation is present at asparagine 398. Residues serine 400 and serine 403 each carry the phosphoserine modification. Asparagine 406 carries N-linked (GlcNAc...) asparagine glycosylation. Phosphoserine is present on residues serine 407 and serine 556. Threonine 557 carries the phosphothreonine modification. Basic and acidic residues predominate over residues 563-572 (TPKEAAHHAG). Residues 609–629 (LASILFLYCACMSPVITFGGL) traverse the membrane as a helical segment. Residues 630 to 637 (LGEATEGR) lie on the Cytoplasmic side of the membrane. A helical membrane pass occupies residues 638–658 (ISAIESLFGASLTGIAYSLFA). The Extracellular portion of the chain corresponds to 659–695 (GQPLTILGSTGPVLVFEKILYKFCRDYQLSYLSLRTS). A helical transmembrane segment spans residues 696–716 (IGLWTSFLCIVLVATDASSLV). The Cytoplasmic portion of the chain corresponds to 717 to 725 (CYITRFTEE). A helical membrane pass occupies residues 726 to 746 (AFAALICIIFIYEALEKLFDL). A Phosphoserine modification is found at lysine 742. The Extracellular portion of the chain corresponds to 747 to 817 (GETYAFNMHN…VFLGSACGHH (71 aa)). Cysteine 766 and cysteine 768 are oxidised to a cystine. Phosphoserine is present on residues proline 771 and proline 774. Asparagine 776 is a glycosylation site (N-linked (GlcNAc...) asparagine). A Phosphoserine modification is found at alanine 780. N-linked (GlcNAc...) asparagine glycans are attached at residues asparagine 786 and asparagine 791. A disulfide bridge connects residues cysteine 802 and cysteine 814. Residues 818-838 (GPYIPDVLFWCVILFFTTFFL) traverse the membrane as a helical segment. Residues 839 to 861 (SSFLKQFKTKRYFPTKVRSTISD) are Cytoplasmic-facing. A helical transmembrane segment spans residues 862-882 (FAVFLTIVIMVTIDYLVGVPS). The Extracellular segment spans residues 883-908 (PKLHVPEKFEPTHPERGWIISPLGDN). The chain crosses the membrane as a helical span at residues 909 to 929 (PWWTLLIAAIPALLCTILIFM). The Cytoplasmic portion of the chain corresponds to 930 to 954 (DQQITAVIINRKEHKLKKGAGYHLD). A helical transmembrane segment spans residues 955–975 (LLMVGVMLGVCSVMGLPWFVA). At 976 to 1011 (ATVLSISHVNSLKVESECSAPGEQPKFLGIREQRVT) the chain is on the extracellular side. A phosphoserine mark is found at glutamate 1007, valine 1010, and phenylalanine 1016. 2 essential for cell membrane localization and transport activity regions span residues 1008–1131 (QRVT…KREL) and 1127–1214 (TKRE…ETSL). The helical transmembrane segment at 1012–1032 (GLMIFILMGLSVFMTSVLKFI) threads the bilayer. Residues 1033–1034 (PM) are Cytoplasmic-facing. The helical transmembrane segment at 1035 to 1055 (PVLYGVFLYMGVSSLKGIQLF) threads the bilayer. The Extracellular portion of the chain corresponds to 1056 to 1092 (DRIKLFGMPAKHQPDLIYLRYVPLWKVHIFTVIQLTC). 8 positions are modified to phosphoserine: tyrosine 1073, valine 1077, serine 1102, alanine 1105, valine 1106, proline 1109, methionine 1111, and leucine 1115. Residues 1093-1113 (LVLLWVIKVSAAAVVFPMMVL) form a helical membrane-spanning segment. Topologically, residues 1114-1214 (ALVFVRKLMD…KKYVDAETSL (101 aa)) are cytoplasmic. The CA2-binding stretch occupies residues 1134-1136 (LDD). A compositionally biased stretch (basic and acidic residues) spans 1144–1162 (KKEDDKKKKEKEEAERMLQ). Residues 1144-1169 (KKEDDKKKKEKEEAERMLQDDDDTVH) are disordered. Position 1167 is a phosphothreonine (threonine 1167). Phosphoserine is present on residues serine 1176, serine 1188, aspartate 1201, and serine 1213. The PDZ-binding motif lies at 1211 to 1214 (ETSL).

Belongs to the anion exchanger (TC 2.A.31) family. In terms of assembly, interacts with CFTR through NHERF1/EBP50. Interacts with USH1C. Forms a complex with ATP6V1B1 and NHERF1/EBP50. Interacts in a pH dependent-manner with CA2/carbonic anhydrase 2. In terms of tissue distribution, highly expressed in testis and spleen. Also expressed in retina, colon, small intestine, ovary, thymus, prostate, muscle, heart and kidney. As to expression, expressed in skeletal muscle and heart muscle.

Its subcellular location is the basolateral cell membrane. It localises to the apical cell membrane. It is found in the cell projection. The protein localises to the stereocilium. The protein resides in the cell membrane. The enzyme catalyses hydrogencarbonate(in) + Na(+)(in) = hydrogencarbonate(out) + Na(+)(out). Its activity is regulated as follows. Transporter activity is regulated by CA2/carbonic anhydrase 2, cAMP and PKA. Insensitive to stilbene derivatives. Inhibited by 5-(N-ethyl-N-isopropyl)-amiloride (EIPA). Functionally, electroneutral sodium- and bicarbonate-dependent cotransporter with a Na(+):HCO3(-) 1:1 stoichiometry. Mediates the sodium-dependent bicarbonate transport important for pH recovery after acid load as well as for regulation of steady-state pH in the duodenum and vascular smooth muscle cells. Plays a key role in macrophage acidification, mediating bicarbonate import into the cytoplasm which is crucial for net acid extrusion and maintenance of cytoplasmic pH during phagocytosis. Provides cellular bicarbonate for de novo purine and pyrimidine synthesis and is a key mediator of de novo nucleotide synthesis downstream of mTORC1 signaling in proliferating cells. In terms of biological role, plays a key role in macrophage acidification, mediating bicarbonate import into the cytoplasm which is crucial for net acid extrusion and maintenance of cytoplasmic pH during phagocytosis. This Homo sapiens (Human) protein is Sodium bicarbonate cotransporter 3 (SLC4A7).